The primary structure comprises 127 residues: Protein ApaG (127 aa).

The 125-residue stretch at 3–127 (DTNKYRIEVQ…FVLASPRALH (125 aa)) folds into the ApaG domain.

The chain is Protein ApaG from Dechloromonas aromatica (strain RCB).